A 697-amino-acid polypeptide reads, in one-letter code: MMEELHSLDPRRQELLEARFTGVGVAKAPLNSESSNQSLCSLGSLSDKELEQTPEKKQNDQRNRKRKADPYETSQGKNTPRGHKISDYFEFACGSGPGTSPGRSVPPVARSSPQHSLSNPLPLPSQQCSPPSTAPVNPEHSCASFKHISVQHRCTQSDLTMDKISALENSKSSDLEKKEGRIDDLLRVNCDLRRQMDEQKKMLEKYKERLNRCVTMSKKLLIEKSKQEKMACRDKSMQDRLRLGHFTTVRHGASFTEQWTDGYAFQNLIKQQERINTQREEIERQRKMLAKRKPPAMGQTPPANNEQKQRKNKTNGAENEALTLAEYHEQEEIFKLRLGHLKKEEAEIQAELERLERVRNLHIRELKRIHNEDNSQFKDHPTLNDRYLLLHLLGRGGFSEVYKAFDLTEQRYVAVKIHQLNKNWRDEKKENYHKHACREYRIHKELDHPRIVKLYDYFSLDTDSFCTVLEYCEGNDLDFYLKQHKLMTEKEARSIIMQIVNALKYLNEIKPPIIHYDLKPGNILLVNGTACGEIKITDFGLSKIMDDDSYNSVDGMELTSQGAGTYWYLPPECFVVGKEPPKISNKVDVWSVGVIFYQCLYGRKPFGHNQSQQDILQENTILKATEVQFPPKPVVTPEAKAFIRRCLAYRKEDRIDVQQLACDPYLLPHIRKSVSTSIPANAAVASTSGSSNNSLSN.

Disordered stretches follow at residues 27-136 (KAPL…TAPV) and 289-315 (LAKR…NKTN). The span at 31 to 44 (NSESSNQSLCSLGS) shows a compositional bias: polar residues. The span at 46–62 (SDKELEQTPEKKQNDQR) shows a compositional bias: basic and acidic residues. Positions 111 to 131 (SSPQHSLSNPLPLPSQQCSPP) are enriched in low complexity. Coiled-coil stretches lie at residues 264-293 (AFQN…AKRK) and 334-372 (FKLR…IHNE). One can recognise a Protein kinase domain in the interval 387–666 (YLLLHLLGRG…VQQLACDPYL (280 aa)). ATP contacts are provided by residues 393–401 (LGRGGFSEV) and Lys-416. Asp-517 (proton acceptor) is an active-site residue.

This sequence belongs to the protein kinase superfamily. Ser/Thr protein kinase family. In terms of assembly, monomer. May form homodimers; homodimerization may enhance autophosphoylation and enzymatic activity. Heterodimer with TLK1. Mg(2+) is required as a cofactor. Post-translationally, phosphorylated. Autophosphorylated; phosphorylation promotes the assembly of higher order oligomers and enzymatic activity.

It localises to the nucleus. It is found in the nucleoplasm. Its subcellular location is the cytoplasm. The protein resides in the perinuclear region. The protein localises to the cytoskeleton. The enzyme catalyses L-seryl-[protein] + ATP = O-phospho-L-seryl-[protein] + ADP + H(+). It catalyses the reaction L-threonyl-[protein] + ATP = O-phospho-L-threonyl-[protein] + ADP + H(+). Functionally, serine/threonine-protein kinase involved in the process of chromatin assembly and probably also DNA replication, transcription, repair, and chromosome segregation. Negative regulator of amino acid starvation-induced autophagy. The sequence is that of Serine/threonine-protein kinase tousled-like 2 from Xenopus tropicalis (Western clawed frog).